We begin with the raw amino-acid sequence, 179 residues long: Inorganic pyrophosphatase (179 aa).

Positions 30, 44, and 56 each coordinate substrate. Positions 66, 71, and 103 each coordinate Mg(2+). Y142 is a substrate binding site.

Belongs to the PPase family. In terms of assembly, homohexamer. The cofactor is Mg(2+).

The protein localises to the cytoplasm. The catalysed reaction is diphosphate + H2O = 2 phosphate + H(+). Its function is as follows. Catalyzes the hydrolysis of inorganic pyrophosphate (PPi) forming two phosphate ions. The sequence is that of Inorganic pyrophosphatase from Rhodospirillum rubrum (strain ATCC 11170 / ATH 1.1.1 / DSM 467 / LMG 4362 / NCIMB 8255 / S1).